Reading from the N-terminus, the 360-residue chain is Photosystem II protein D1 2 (360 aa).

3 helical membrane-spanning segments follow: residues Tyr-29 to Thr-46, His-118 to Leu-133, and Trp-142 to Ala-156. Residue His-118 coordinates chlorophyll a. Tyr-126 contacts pheophytin a. Positions 170 and 189 each coordinate [CaMn4O5] cluster. The chain crosses the membrane as a helical span at residues Phe-197 to Leu-218. Residue His-198 coordinates chlorophyll a. A quinone is bound by residues His-215 and Ser-264 to Phe-265. His-215 contacts Fe cation. Fe cation is bound at residue His-272. The chain crosses the membrane as a helical span at residues Phe-274–Leu-288. 4 residues coordinate [CaMn4O5] cluster: His-332, Glu-333, Asp-342, and Ala-344. Residues Ala-345 to Gly-360 constitute a propeptide that is removed on maturation.

It belongs to the reaction center PufL/M/PsbA/D family. As to quaternary structure, PSII is composed of 1 copy each of membrane proteins PsbA, PsbB, PsbC, PsbD, PsbE, PsbF, PsbH, PsbI, PsbJ, PsbK, PsbL, PsbM, PsbT, PsbX, PsbY, PsbZ, Psb30/Ycf12, peripheral proteins PsbO, CyanoQ (PsbQ), PsbU, PsbV and a large number of cofactors. It forms dimeric complexes. The D1/D2 heterodimer binds P680, chlorophylls that are the primary electron donor of PSII, and subsequent electron acceptors. It shares a non-heme iron and each subunit binds pheophytin, quinone, additional chlorophylls, carotenoids and lipids. D1 provides most of the ligands for the Mn4-Ca-O5 cluster of the oxygen-evolving complex (OEC). There is also a Cl(-1) ion associated with D1 and D2, which is required for oxygen evolution. The PSII complex binds additional chlorophylls, carotenoids and specific lipids. serves as cofactor. Tyr-161 forms a radical intermediate that is referred to as redox-active TyrZ, YZ or Y-Z. In terms of processing, C-terminally processed by CtpA; processing is essential to allow assembly of the oxygen-evolving complex and thus photosynthetic growth.

The protein localises to the cellular thylakoid membrane. The catalysed reaction is 2 a plastoquinone + 4 hnu + 2 H2O = 2 a plastoquinol + O2. In terms of biological role, photosystem II (PSII) is a light-driven water:plastoquinone oxidoreductase that uses light energy to abstract electrons from H(2)O, generating O(2) and a proton gradient subsequently used for ATP formation. It consists of a core antenna complex that captures photons, and an electron transfer chain that converts photonic excitation into a charge separation. The D1/D2 (PsbA/PsbD) reaction center heterodimer binds P680, the primary electron donor of PSII as well as several subsequent electron acceptors. This chain is Photosystem II protein D1 2, found in Picosynechococcus sp. (strain ATCC 27264 / PCC 7002 / PR-6) (Agmenellum quadruplicatum).